The sequence spans 607 residues: Probable LRR receptor-like serine/threonine-protein kinase At5g65240 (607 aa).

The N-terminal stretch at 1-24 (MALLIITALVFSSLWSSVSPDAQG) is a signal peptide. At 25–219 (DALFALRSSL…SGDSSSRKTG (195 aa)) the chain is on the extracellular side. Asparagine 74 and asparagine 110 each carry an N-linked (GlcNAc...) asparagine glycan. LRR repeat units lie at residues 87-111 (LTTL…IGNL), 112-135 (SSLT…LGNL), 137-159 (NLQF…LTGL), and 160-183 (SKLI…LFKI). N-linked (GlcNAc...) asparagine glycosylation is found at asparagine 149, asparagine 171, asparagine 187, and asparagine 192. Residues 220-240 (IIAGVVSGIAVILLGFFFFFF) form a helical membrane-spanning segment. The Cytoplasmic portion of the chain corresponds to 241–607 (CKDKHKGYKR…QDAIELSGGR (367 aa)). Threonine 281 is modified (phosphothreonine). One can recognise a Protein kinase domain in the interval 284-568 (FSEKNVLGQG…EGEGLAERWE (285 aa)). Position 290–298 (290–298 (LGQGGFGKV)) interacts with ATP. The residue at position 307 (threonine 307) is a Phosphothreonine. ATP is bound at residue lysine 312. Serine 365 is subject to Phosphoserine. Catalysis depends on aspartate 411, which acts as the Proton acceptor. A phosphothreonine mark is found at threonine 444, threonine 445, and threonine 450. Serine 460 carries the phosphoserine modification. Threonine 461 bears the Phosphothreonine mark. The residue at position 465 (serine 465) is a Phosphoserine. Residue threonine 541 is modified to Phosphothreonine.

This sequence belongs to the protein kinase superfamily. Ser/Thr protein kinase family.

It localises to the cell membrane. The catalysed reaction is L-seryl-[protein] + ATP = O-phospho-L-seryl-[protein] + ADP + H(+). It catalyses the reaction L-threonyl-[protein] + ATP = O-phospho-L-threonyl-[protein] + ADP + H(+). This chain is Probable LRR receptor-like serine/threonine-protein kinase At5g65240, found in Arabidopsis thaliana (Mouse-ear cress).